A 507-amino-acid polypeptide reads, in one-letter code: ATP synthase subunit alpha, mitochondrial (507 aa).

171–178 (GDRQTGKT) provides a ligand contact to ATP.

It belongs to the ATPase alpha/beta chains family. In terms of assembly, F-type ATPases have 2 components, CF(1) - the catalytic core - and CF(0) - the membrane proton channel. CF(1) has five subunits: alpha(3), beta(3), gamma(1), delta(1), epsilon(1). CF(0) has three main subunits: a, b and c.

It is found in the mitochondrion. It localises to the mitochondrion inner membrane. In terms of biological role, mitochondrial membrane ATP synthase (F(1)F(0) ATP synthase or Complex V) produces ATP from ADP in the presence of a proton gradient across the membrane which is generated by electron transport complexes of the respiratory chain. F-type ATPases consist of two structural domains, F(1) - containing the extramembraneous catalytic core, and F(0) - containing the membrane proton channel, linked together by a central stalk and a peripheral stalk. During catalysis, ATP synthesis in the catalytic domain of F(1) is coupled via a rotary mechanism of the central stalk subunits to proton translocation. Subunits alpha and beta form the catalytic core in F(1). Rotation of the central stalk against the surrounding alpha(3)beta(3) subunits leads to hydrolysis of ATP in three separate catalytic sites on the beta subunits. Subunit alpha does not bear the catalytic high-affinity ATP-binding sites. This Raphanus sativus (Radish) protein is ATP synthase subunit alpha, mitochondrial (ATPA).